The primary structure comprises 69 residues: Large ribosomal subunit protein uL29 (69 aa).

The protein belongs to the universal ribosomal protein uL29 family.

In Methylobacillus flagellatus (strain ATCC 51484 / DSM 6875 / VKM B-1610 / KT), this protein is Large ribosomal subunit protein uL29.